Consider the following 469-residue polypeptide: Adenosylhomocysteinase (469 aa).

Substrate is bound by residues T63, D139, and E164. 165 to 167 (TTT) is an NAD(+) binding site. Residues K194 and D198 each contribute to the substrate site. Residues N199, 228-233 (GYGDVG), E251, N300, 321-323 (IGH), and N375 contribute to the NAD(+) site.

The protein belongs to the adenosylhomocysteinase family. NAD(+) serves as cofactor.

The protein resides in the cytoplasm. It carries out the reaction S-adenosyl-L-homocysteine + H2O = L-homocysteine + adenosine. It participates in amino-acid biosynthesis; L-homocysteine biosynthesis; L-homocysteine from S-adenosyl-L-homocysteine: step 1/1. Functionally, may play a key role in the regulation of the intracellular concentration of adenosylhomocysteine. This chain is Adenosylhomocysteinase, found in Pseudomonas aeruginosa (strain LESB58).